Reading from the N-terminus, the 1404-residue chain is Clustered mitochondria protein homolog (1404 aa).

Positions His-357–Leu-646 constitute a Clu domain. The segment covering Ala-528 to Glu-540 has biased composition (acidic residues). Disordered regions lie at residues Ala-528–Ala-561, Asp-706–Asp-735, Gly-996–Thr-1046, and Ser-1337–Thr-1372. Residues Asp-706–Ala-723 are compositionally biased toward basic and acidic residues. Low complexity-rich tracts occupy residues Asn-1021–Thr-1046 and Ala-1358–Thr-1372.

This sequence belongs to the CLU family. May associate with the eukaryotic translation initiation factor 3 (eIF-3) complex.

Its subcellular location is the cytoplasm. In terms of biological role, mRNA-binding protein involved in proper cytoplasmic distribution of mitochondria. The sequence is that of Clustered mitochondria protein homolog from Mycosarcoma maydis (Corn smut fungus).